A 178-amino-acid chain; its full sequence is Large ribosomal subunit protein uL6 (178 aa).

It belongs to the universal ribosomal protein uL6 family. In terms of assembly, part of the 50S ribosomal subunit.

This protein binds to the 23S rRNA, and is important in its secondary structure. It is located near the subunit interface in the base of the L7/L12 stalk, and near the tRNA binding site of the peptidyltransferase center. This is Large ribosomal subunit protein uL6 from Nitrosococcus oceani (strain ATCC 19707 / BCRC 17464 / JCM 30415 / NCIMB 11848 / C-107).